The chain runs to 817 residues: DNA mismatch repair protein MutS (817 aa).

ATP is bound at residue 604-611 (GPNMSGKS).

The protein belongs to the DNA mismatch repair MutS family.

In terms of biological role, this protein is involved in the repair of mismatches in DNA. It is possible that it carries out the mismatch recognition step. This protein has a weak ATPase activity. The protein is DNA mismatch repair protein MutS of Petrotoga mobilis (strain DSM 10674 / SJ95).